Here is a 969-residue protein sequence, read N- to C-terminus: Lateral signaling target protein 2 homolog (969 aa).

Lys87 is covalently cross-linked (Glycyl lysine isopeptide (Lys-Gly) (interchain with G-Cter in ubiquitin)). Disordered regions lie at residues 290–323 (QDGE…GVEE), 336–360 (SVWK…EEPI), 390–437 (STLL…YHDD), and 715–777 (RSEC…DMSE). Residues 295-310 (PTSSTNDPSASTGPDS) are compositionally biased toward polar residues. The segment covering 336–346 (SVWKEEEEKQV) has biased composition (basic and acidic residues). Positions 391–402 (TLLSPPSQNQSP) are enriched in polar residues. Residues 411–423 (GSSLEGSSATSST) are compositionally biased toward low complexity. Positions 715 to 729 (RSECFGKQSKDDNRK) are enriched in basic and acidic residues. 2 stretches are compositionally biased toward low complexity: residues 732–745 (SSSQ…VPSS) and 756–769 (SLSS…VSSL). The segment at 899–959 (DEACNSCIAC…VCTHCYMFHV (61 aa)) adopts an FYVE-type zinc-finger fold. Cys905, Cys908, Cys921, Cys924, Cys929, Cys932, Cys951, and Cys954 together coordinate Zn(2+).

It belongs to the lst-2 family. Post-translationally, monoubiquitination at Lys-87 prevents binding to phosphatidylinositol 3-phosphate (PI3P) and localization to early endosome membranes.

It is found in the cytoplasm. It localises to the cytosol. Its subcellular location is the early endosome membrane. Functionally, negative regulator of epidermal growth factor receptor (EGFR) signaling. Acts by promoting EGFR degradation in endosomes when not monoubiquitinated. The sequence is that of Lateral signaling target protein 2 homolog (zfyve28) from Danio rerio (Zebrafish).